The sequence spans 944 residues: Isoleucine--tRNA ligase (944 aa).

Positions 58 to 68 (PYANGSIHIGH) match the 'HIGH' region motif. Glu563 serves as a coordination point for L-isoleucyl-5'-AMP. The 'KMSKS' region motif lies at 604 to 608 (KMSKS). An ATP-binding site is contributed by Lys607. 4 residues coordinate Zn(2+): Cys907, Cys910, Cys927, and Cys930.

Belongs to the class-I aminoacyl-tRNA synthetase family. IleS type 1 subfamily. In terms of assembly, monomer. It depends on Zn(2+) as a cofactor.

Its subcellular location is the cytoplasm. The enzyme catalyses tRNA(Ile) + L-isoleucine + ATP = L-isoleucyl-tRNA(Ile) + AMP + diphosphate. Its function is as follows. Catalyzes the attachment of isoleucine to tRNA(Ile). As IleRS can inadvertently accommodate and process structurally similar amino acids such as valine, to avoid such errors it has two additional distinct tRNA(Ile)-dependent editing activities. One activity is designated as 'pretransfer' editing and involves the hydrolysis of activated Val-AMP. The other activity is designated 'posttransfer' editing and involves deacylation of mischarged Val-tRNA(Ile). This Salmonella typhimurium (strain LT2 / SGSC1412 / ATCC 700720) protein is Isoleucine--tRNA ligase.